A 442-amino-acid chain; its full sequence is 3-phosphoshikimate 1-carboxyvinyltransferase (442 aa).

Lys-25, Ser-26, and Arg-30 together coordinate 3-phosphoshikimate. Lys-25 provides a ligand contact to phosphoenolpyruvate. Residues Gly-96 and Arg-124 each coordinate phosphoenolpyruvate. 6 residues coordinate 3-phosphoshikimate: Ser-171, Ser-172, Gln-173, Ser-203, Asp-325, and Lys-352. Gln-173 contacts phosphoenolpyruvate. Asp-325 (proton acceptor) is an active-site residue. Positions 356, 400, and 425 each coordinate phosphoenolpyruvate.

This sequence belongs to the EPSP synthase family. As to quaternary structure, monomer.

Its subcellular location is the cytoplasm. It carries out the reaction 3-phosphoshikimate + phosphoenolpyruvate = 5-O-(1-carboxyvinyl)-3-phosphoshikimate + phosphate. Its pathway is metabolic intermediate biosynthesis; chorismate biosynthesis; chorismate from D-erythrose 4-phosphate and phosphoenolpyruvate: step 6/7. In terms of biological role, catalyzes the transfer of the enolpyruvyl moiety of phosphoenolpyruvate (PEP) to the 5-hydroxyl of shikimate-3-phosphate (S3P) to produce enolpyruvyl shikimate-3-phosphate and inorganic phosphate. In Bordetella pertussis (strain Tohama I / ATCC BAA-589 / NCTC 13251), this protein is 3-phosphoshikimate 1-carboxyvinyltransferase.